The sequence spans 592 residues: Laccase PFICI_06862 (592 aa).

An N-terminal signal peptide occupies residues methionine 1–alanine 19. Asparagine 26 is a glycosylation site (N-linked (GlcNAc...) asparagine). Plastocyanin-like domains are found at residues glutamine 32–proline 142 and valine 173–glycine 350. 4 residues coordinate Cu cation: histidine 78, histidine 80, histidine 123, and histidine 125. 3 N-linked (GlcNAc...) asparagine glycosylation sites follow: asparagine 370, asparagine 407, and asparagine 454. The Plastocyanin-like 3 domain occupies serine 445 to glycine 563. Residue histidine 475 participates in Cu cation binding. N-linked (GlcNAc...) asparagine glycosylation occurs at asparagine 524.

Belongs to the multicopper oxidase family.

It is found in the cell surface. Its pathway is pigment biosynthesis; melanin biosynthesis. In terms of biological role, laccase involved the biosynthesis of dihydroxynaphthalene (DHN)-melanin, a bluish-green pigment forming a dark layer in the conidial wall that protects the conidia from UV radiations. The first step of the pathway is the production of the pentaketide 1,3,6,8-tetrahydroxynaphthalene (1,3,6,8-THN or T4HN) by the polyketide synthase PfmaE though condensation of acetyl-CoA with malonyl-CoA. T4HN is not stable and easily oxidizes into the stable form flaviolin. T4HN is also substrate of the hydroxynaphthalene reductase PfmaG to yield scytalone. The scytalone dehydratase PfmaJ then reduces scytalone to 1,3,8-THN. 1,3,8-THN is then substrate of the hydroxynaphthalene reductase PfmaI to yield vermelone. Vermelone is further converted by the multicopper oxidase PfmaD to 1,8-DHN. Finally the laccase PFICI_06862 transforms 1,8-DHN to DHN-melanin. The roles of the 5-oxoprolinase PfmaA and the proline iminopeptidase PfmaB within the cluster have not been elucidated yet. The protein is Laccase PFICI_06862 of Pestalotiopsis fici (strain W106-1 / CGMCC3.15140).